A 636-amino-acid polypeptide reads, in one-letter code: Polyadenylate-binding protein 1 (636 aa).

Methionine 1 bears the N-acetylmethionine mark. 4 consecutive RRM domains span residues 11–89, 99–175, 191–268, and 294–370; these read ASLY…WSQR, GNIF…RFKS, TNVY…RAQK, and VNLY…LAQR. Residues 166 to 289 form a UNR-binding region; it reads RKVFVGRFKS…FEQMKQDRIT (124 aa). The residue at position 299 (lysine 299) is an N6-methyllysine. At serine 315 the chain carries Phosphoserine. Threonine 319 carries the phosphothreonine modification. 4 positions are modified to omega-N-methylarginine: arginine 385, arginine 419, arginine 432, and arginine 436. An omega-N-methylated arginine; by CARM1 mark is found at arginine 455 and arginine 460. Omega-N-methylarginine is present on residues arginine 475 and arginine 481. Asymmetric dimethylarginine; alternate is present on arginine 493. Arginine 493 is modified (dimethylated arginine; alternate). An Omega-N-methylarginine; alternate modification is found at arginine 493. An Omega-N-methylarginine modification is found at arginine 506. An N6-acetyllysine modification is found at lysine 512. At arginine 518 the chain carries Omega-N-methylarginine. The region spanning 542–619 is the PABC domain; sequence QEPLTASMLA…AVAVLQAHQA (78 aa).

This sequence belongs to the polyadenylate-binding protein type-1 family. As to quaternary structure, may form homodimers. Component of a multisubunit autoregulatory ribonucleoprotein complex (ARC), at least composed of IGF2BP1, PABPC1 and CSDE1. Directly interacts with IGF2BP1. Part of a complex associated with the FOS mCRD domain and consisting of HNRPD, SYNCRIP, PAIP1 and CSDE1/UNR. Interacts with PAIP1 and PAIP2 (via the PABPC1-interacting motifs PAM1 and PAM2). Interacts with PAIP1 with a 1:1 stoichiometry and with PAIP2 with a 1:2 stoichiometry. The interaction with CSDE1 is direct and RNA-independent. Found in a mRNP complex with YBX2. Interacts with TENT2/GLD2. Identified in the spliceosome C complex. Identified in a mRNP complex, at least composed of DHX9, DDX3X, ELAVL1, HNRNPU, IGF2BP1, ILF3, PABPC1, PCBP2, PTBP2, STAU1, STAU2, SYNCRIP and YBX1. The interaction with DDX3X is direct and RNA-independent. This interaction increases in stressed cells and decreases during cell recovery. Identified in a IGF2BP1-dependent mRNP granule complex containing untranslated mRNAs. Interacts with NXF1/TAP. Interacts with PIWIL1. Interacts with AGO1, AGO2, GSPT1 and GSPT2. Interacts with LARP4B. Interacts (via the second and third RRM domains and the C-terminus) with PAIP2B (via central acidic portion and C-terminus). Forms a complex with LARP1 and SHFL. Interacts with LARP4. Interacts with ZFC3H1 in a RNase-sensitive manner. Interacts with TRIM71 (via NHL repeats) in an RNA-dependent manner. Interacts with TENT5C; the interaction has no effect on TENT5C poly(A) polymerase function. Interacts with G3BP1 and G3BP2. Interacts with ENDOV; the interaction is RNA-dependent and stimulates ENDOV activity. Interacts with UPF1; the interaction is RNA-dependent. Interacts with IGF2BP2 and IGF2BP3. May interact with SETX. Interacts with RBM46. Interacts with PAN3 isoform 1/Pan3L and isoform 3/Pan3S (via N-terminus); interaction with isoform 1 is less efficient than with isoform 3. Post-translationally, phosphorylated by MAPKAPK2. In terms of processing, methylated by CARM1. Arg-493 is dimethylated, probably to asymmetric dimethylarginine.

It is found in the cytoplasm. It localises to the stress granule. The protein resides in the nucleus. Its subcellular location is the cell projection. The protein localises to the lamellipodium. In terms of biological role, binds the poly(A) tail of mRNA, including that of its own transcript, and regulates processes of mRNA metabolism such as pre-mRNA splicing and mRNA stability. Its function in translational initiation regulation can either be enhanced by PAIP1 or repressed by PAIP2. Can probably bind to cytoplasmic RNA sequences other than poly(A) in vivo. Binds to N6-methyladenosine (m6A)-containing mRNAs and contributes to MYC stability by binding to m6A-containing MYC mRNAs. Involved in translationally coupled mRNA turnover. Implicated with other RNA-binding proteins in the cytoplasmic deadenylation/translational and decay interplay of the FOS mRNA mediated by the major coding-region determinant of instability (mCRD) domain. Involved in regulation of nonsense-mediated decay (NMD) of mRNAs containing premature stop codons; for the recognition of premature termination codons (PTC) and initiation of NMD a competitive interaction between UPF1 and PABPC1 with the ribosome-bound release factors is proposed. By binding to long poly(A) tails, may protect them from uridylation by ZCCHC6/ZCCHC11 and hence contribute to mRNA stability. This Rattus norvegicus (Rat) protein is Polyadenylate-binding protein 1 (Pabpc1).